A 140-amino-acid chain; its full sequence is Translation initiation factor 2 subunit beta (140 aa).

It belongs to the eIF-2-beta/eIF-5 family. Heterotrimer composed of an alpha, a beta and a gamma chain.

EIF-2 functions in the early steps of protein synthesis by forming a ternary complex with GTP and initiator tRNA. This Metallosphaera sedula (strain ATCC 51363 / DSM 5348 / JCM 9185 / NBRC 15509 / TH2) protein is Translation initiation factor 2 subunit beta.